Here is a 499-residue protein sequence, read N- to C-terminus: Potassium voltage-gated channel subfamily A member 2 (499 aa).

The segment at 1–27 (MTVATGDLTDGSVGFAGHPQDSYDPEP) is disordered. The tract at residues 1-125 (MTVATGDLTD…YELGEEAMEI (125 aa)) is tetramerization domain. Over 1 to 160 (MTVATGDLTD…LLFEYPESSG (160 aa)) the chain is Cytoplasmic. A helical membrane pass occupies residues 161 to 182 (PARIIAIISVTVILISIVSFCL). Residues 183–221 (ETLPVFRDENEDMHGSGGNYYSYPNSTVRFQKSNTFTDP) lie on the Extracellular side of the membrane. N-linked (GlcNAc...) asparagine glycosylation is present at asparagine 207. Residues 222-243 (FFIVETLCIIWFSFEFLVRFLA) traverse the membrane as a helical segment. Cysteine 244 carries the S-palmitoyl cysteine lipid modification. Residues 244-254 (CPSKAVFFTNL) lie on the Cytoplasmic side of the membrane. The chain crosses the membrane as a helical span at residues 255 to 275 (MNIIDIVAIIPYFITLGTELA). Residues 276–289 (EKTEDGQQGQQAMS) are Extracellular-facing. A helical; Voltage-sensor membrane pass occupies residues 290–310 (LAILRVIRLVRVFRIFKLSRH). The Cytoplasmic portion of the chain corresponds to 311–325 (SKGLQILGQTLNASM). The segment at 312 to 325 (KGLQILGQTLNASM) is S4-S5 linker. A helical membrane pass occupies residues 326–347 (RELGLLIFFLFIGVILFSSAVF). At 348–361 (FAEADERDSQFPSI) the chain is on the extracellular side. The helical intramembrane region spans 362–373 (PDAFWWAVVSMT). Residues 374-379 (TVGYGD) carry the Selectivity filter motif. The stretch at 374–381 (TVGYGDMV) is an intramembrane region. The Extracellular segment spans residues 382–388 (PTTIGGK). A helical membrane pass occupies residues 389-417 (IVGSLCAIAGVLTIALPVPVIVSNFNYFY). The Cytoplasmic portion of the chain corresponds to 418–499 (HRETEGEEQA…VNITKMLTDV (82 aa)). The PDZ-binding motif lies at 497-499 (TDV).

Belongs to the potassium channel family. A (Shaker) (TC 1.A.1.2) subfamily. Kv1.2/KCNA2 sub-subfamily. Homotetramer and heterotetramer with other family members. As to expression, detected in tadpole brain and spinal cord.

The protein resides in the cell membrane. The catalysed reaction is K(+)(in) = K(+)(out). In terms of biological role, voltage-gated potassium channel that mediates transmembrane potassium transport in excitable membranes, primarily in the brain and central nervous system. Prevents aberrant action potential firing and regulates neuronal output. Forms tetrameric potassium-selective channels through which potassium ions pass in accordance with their electrochemical gradient. The channel alternates between opened and closed conformations in response to the voltage difference across the membrane. Can form functional homotetrameric channels and heterotetrameric channels with other family members; the channels characteristics depend critically on the types of channel-forming alpha subunits that are present. Channel properties are modulated by cytoplasmic beta subunits that regulate the subcellular location of the alpha subunits. In vivo, membranes probably contain a mixture of heteromeric potassium channel complexes, making it difficult to assign currents observed in intact tissues to any particular potassium channel family member. Homotetrameric KCNA2 forms a delayed-rectifier potassium channel that opens in response to membrane depolarization, followed by slow spontaneous channel closure. Regulates neuronal excitability and plays a role as pacemaker in the regulation of neuronal action potentials. KCNA2-containing channels play a presynaptic role and prevent hyperexcitability and aberrant action potential firing. Response to toxins that are selective for KCNA2-containing potassium channels suggests that in Purkinje cells, dendritic subthreshold KCNA2-containing potassium channels prevent random spontaneous calcium spikes, suppressing dendritic hyperexcitability without hindering the generation of somatic action potentials, and thereby play an important role in motor coordination. Plays a role in the induction of long-term potentiation of neuron excitability in the CA3 layer of the hippocampus. In Xenopus laevis (African clawed frog), this protein is Potassium voltage-gated channel subfamily A member 2 (kcna2).